The primary structure comprises 1623 residues: RING finger protein 17 (1623 aa).

The segment at Met1–Ser22 is disordered. The RING-type zinc finger occupies Cys32–Glu75. Position 234 is an N6-acetyllysine (Lys234). Tudor domains follow at residues Cys726–Ala784, Lys962–Met1021, and Phe1228–Pro1285. Residues Asn1438 to Glu1462 form a disordered region. One can recognise a Tudor 4 domain in the interval Asp1479–Tyr1539.

In terms of assembly, interacts with MXD1, MXD3, MXD4, MXI1 and PIWIL1. Self-associates. As to expression, testis specific.

It is found in the cytoplasm. The protein resides in the nucleus. Seems to be involved in regulation of transcriptional activity of MYC. In vitro, inhibits DNA-binding activity of Mad-MAX heterodimers. Can recruit Mad transcriptional repressors (MXD1, MXD3, MXD4 and MXI1) to the cytoplasm. May be involved in spermiogenesis. This Homo sapiens (Human) protein is RING finger protein 17 (RNF17).